Consider the following 618-residue polypeptide: MSVEQEVINLGKNIFFNAHHSPMGCSPVFTLGYPGQSGGFDLELGSPPNQNIYIGLQDDGQERYRAFPFFGEGLDERDRYTTDESDSGSSERHSVQQEESGLIIPYNRDEIVRRFGAAIDEWQAGDLTFRLISPFEGVPDPETATEEQLRFALMPAVLAEITVDNTRGTSTRKAFFGLQNNDPVSAIRRLEDVTGGRICGIGQGRHTAIARAIRDYQRRIFYDGIDSQAKGSGKPPVWPWSGRAVLMDTPAGEKATYRFGLCFYRPVRHNRNRCSYYYSRYFANIEEVAEYALAQFNRKLEVARQADALVNDAKLSEDQKFIVAHAIRSYYGSTELLEHDGKPLWIVNEGEYRMMNTFDLLVDQLFYELKMNPWTVKNELDLYTSRYSYRDTVDFPGDATEYPGGISFTHDMGVANSFSLPGYSSYELHAIDDCFSHMTHEQLVNWVLSATVYVHQTNDREWLEPQPADSGASLDSMVNRDHPDPSQRTGMMGLDSSRTMGGRKSPPIQPGRLVGASAEQHLFAGKSWAAYVAMEKLFRDNGRKSAAALAGRQPELGAGTITSHLLPGGIFQPSFRRTMTPRSSLRSRVLSSRYTPDAKKRWIQTADSVHILRRCPRI.

Disordered stretches follow at residues E76–S100 and L463–Q509.

This sequence belongs to the glycosyl hydrolase 52 family.

Its subcellular location is the secreted. The catalysed reaction is Hydrolysis of (1-&gt;4)-beta-D-xylans, to remove successive D-xylose residues from the non-reducing termini.. It functions in the pathway glycan degradation; xylan degradation. The protein is Beta-xylosidase (xylA) of Geobacillus stearothermophilus (Bacillus stearothermophilus).